Here is a 319-residue protein sequence, read N- to C-terminus: Polyprenyl transferase macG (319 aa).

The next 9 membrane-spanning stretches (helical) occupy residues 28–45 (AWLCWYPAIWGACVAAGM), 48–68 (VSLELAPFLRLLFGIWASVTA), 106–126 (AVVAFICWLPVTLAITWGTLG), 127–147 (PAVMAGFIPVWVLSTIYPFMK), 152–172 (FPQVVLGAIIGGAVFPGWVGI), 182–202 (ALPLFFATASWVVYFDVFYAT), 224–244 (VQILLAVLGALQVLLFAVTAL), 249–269 (SLIFWVLGLGVWMVNVPWHIL), and 289–309 (LGLYLTGVSLLELFVVRVYDI).

Belongs to the UbiA prenyltransferase family. The cofactor is Mg(2+).

It is found in the membrane. It participates in secondary metabolite biosynthesis; terpenoid biosynthesis. In terms of biological role, polyprenyl transferase; part of the gene cluster that mediates the biosynthesis of macrophorins, isoprenoid epoxycyclohexenones containing cyclized drimane moieties. The first step of the pathway is the synthesis of 6-methylsalicylic acid (6-MSA) by the polyketide synthase macA. 6-MSA is then converted to m-cresol by the decarboxylase macB. The cytochrome P450 monooxygenase macC then catalyzes the oxidation of m-cresol to toluquinol. Epoxidation of toluquinol is then performed by the short chain dehydrogenase macD, with the help of macE, and a further prenylation by macG leads to 7-deacetoxyyanuthone A. The next step is the hydroxylation of C-22 of 7-deacetoxyyanuthone A by the cytochrome P450 monooxygenase macH to yield 22-deacetylyanuthone A. O-Mevalon transferase macI then attaches mevalon to the hydroxyl group of 22-deacetylyanuthone A to produce yanuthone E. The terpene cyclase macJ catalyzes the cyclization of 22-deacetylyanuthone A to macrophorin A. MacJ is also able to catalyze cyclization of yanuthone E and 7-deacetoxyyanuthone A to their corresponding macrophorins. The macJ products can be further modified by macH and macJ, as well as by the FAD-dependent monooxygenase macF, to produce additional macrophorins, including 4'-oxomacrophorin A, 4'-oxomacrophorin D and 4'-oxomacrophorin E. The chain is Polyprenyl transferase macG from Penicillium terrestre.